The primary structure comprises 145 residues: Protein BUD31 homolog 1 (145 aa).

This sequence belongs to the BUD31 (G10) family.

It localises to the nucleus. This is Protein BUD31 homolog 1 from Oryza sativa subsp. japonica (Rice).